The primary structure comprises 102 residues: Small ribosomal subunit protein uS10 (102 aa).

The tract at residues 34-58 (LSGPVPLPTKTLEIPARKSPDGEGT) is disordered.

It belongs to the universal ribosomal protein uS10 family. As to quaternary structure, part of the 30S ribosomal subunit.

Involved in the binding of tRNA to the ribosomes. This Natronomonas pharaonis (strain ATCC 35678 / DSM 2160 / CIP 103997 / JCM 8858 / NBRC 14720 / NCIMB 2260 / Gabara) (Halobacterium pharaonis) protein is Small ribosomal subunit protein uS10.